The sequence spans 200 residues: Recombination protein RecR (200 aa).

The C4-type zinc-finger motif lies at cysteine 57 to cysteine 72. In terms of domain architecture, Toprim spans threonine 80–proline 175.

The protein belongs to the RecR family.

In terms of biological role, may play a role in DNA repair. It seems to be involved in an RecBC-independent recombinational process of DNA repair. It may act with RecF and RecO. The protein is Recombination protein RecR of Pseudomonas fluorescens (strain ATCC BAA-477 / NRRL B-23932 / Pf-5).